Here is a 343-residue protein sequence, read N- to C-terminus: Cytoplasmic tRNA 2-thiolation protein 1 (343 aa).

Belongs to the TtcA family. CTU1/NCS6/ATPBD3 subfamily.

It localises to the cytoplasm. It functions in the pathway tRNA modification; 5-methoxycarbonylmethyl-2-thiouridine-tRNA biosynthesis. Functionally, plays a central role in 2-thiolation of mcm(5)S(2)U at tRNA wobble positions of tRNA(Lys), tRNA(Glu) and tRNA(Gln). Directly binds tRNAs and probably acts by catalyzing adenylation of tRNAs, an intermediate required for 2-thiolation. It is unclear whether it acts as a sulfurtransferase that transfers sulfur from thiocarboxylated URM1 onto the uridine of tRNAs at wobble position. The protein is Cytoplasmic tRNA 2-thiolation protein 1 of Drosophila mojavensis (Fruit fly).